A 50-amino-acid polypeptide reads, in one-letter code: Large ribosomal subunit protein bL33 (50 aa).

It belongs to the bacterial ribosomal protein bL33 family.

The protein is Large ribosomal subunit protein bL33 of Citrifermentans bemidjiense (strain ATCC BAA-1014 / DSM 16622 / JCM 12645 / Bem) (Geobacter bemidjiensis).